Here is a 300-residue protein sequence, read N- to C-terminus: Peroxisomal 2,4-dienoyl-CoA reductase [(3E)-enoyl-CoA-producing] (300 aa).

NADP(+) contacts are provided by residues 42 to 47 (GGGSGI), 67 to 71 (RNLEK), and Asp-93. Position 67 (Arg-67) interacts with substrate. Residues Arg-95, Phe-125, and 133–135 (SFN) contribute to the substrate site. NADP(+)-binding positions include Lys-189 and 215-221 (PGPISGT). Residue Arg-226 participates in substrate binding. Residues 298 to 300 (AKL) carry the Microbody targeting signal motif.

Belongs to the short-chain dehydrogenases/reductases (SDR) family. 2,4-dienoyl-CoA reductase subfamily. Monomer, dimer and oligomer.

Its subcellular location is the peroxisome. The catalysed reaction is a (2E,4Z)-dienoyl-CoA + NADPH + H(+) = a 4,5-saturated-(3E)-enoyl-CoA + NADP(+). It catalyses the reaction a (2E,4E)-dienoyl-CoA + NADPH + H(+) = a 4,5-saturated-(3E)-enoyl-CoA + NADP(+). It carries out the reaction (2E,4E)-hexadienoyl-CoA + NADPH + H(+) = (3E)-hexenoyl-CoA + NADP(+). The enzyme catalyses (2E,4E)-decadienoyl-CoA + NADPH + H(+) = (3E)-decenoyl-CoA + NADP(+). The catalysed reaction is (2E,4Z,7Z,10Z,13Z,16Z,19Z)-docosaheptaenoyl-CoA + NADPH + H(+) = (3E,7Z,10Z,13Z,16Z,19Z)-docosahexaenoyl-CoA + NADP(+). In terms of biological role, auxiliary enzyme of beta-oxidation. Participates in the degradation of unsaturated fatty enoyl-CoA esters having double bonds in both even- and odd-numbered positions in peroxisome. Catalyzes the NADP-dependent reduction of 2,4-dienoyl-CoA to yield trans-3-enoyl-CoA. In Danio rerio (Zebrafish), this protein is Peroxisomal 2,4-dienoyl-CoA reductase [(3E)-enoyl-CoA-producing] (decr2).